The primary structure comprises 489 residues: Betaine aldehyde dehydrogenase (489 aa).

Residues Thr26 and Asp93 each coordinate K(+). 150-152 serves as a coordination point for NAD(+); that stretch reads GAW. Lys162 serves as the catalytic Charge relay system. 176-179 is an NAD(+) binding site; it reads KPSE. Position 180 (Val180) interacts with K(+). 229–232 contributes to the NAD(+) binding site; sequence GVET. K(+) is bound at residue Leu245. The active-site Proton acceptor is the Glu251. Residues Gly253, Cys285, and Glu386 each contribute to the NAD(+) site. Catalysis depends on Cys285, which acts as the Nucleophile. The residue at position 285 (Cys285) is a Cysteine sulfenic acid (-SOH). K(+)-binding residues include Lys456 and Gly459. Catalysis depends on Glu463, which acts as the Charge relay system.

It belongs to the aldehyde dehydrogenase family. Dimer of dimers. K(+) serves as cofactor.

It catalyses the reaction betaine aldehyde + NAD(+) + H2O = glycine betaine + NADH + 2 H(+). It functions in the pathway amine and polyamine biosynthesis; betaine biosynthesis via choline pathway; betaine from betaine aldehyde: step 1/1. Its function is as follows. Involved in the biosynthesis of the osmoprotectant glycine betaine. Catalyzes the irreversible oxidation of betaine aldehyde to the corresponding acid. This chain is Betaine aldehyde dehydrogenase, found in Burkholderia vietnamiensis (strain G4 / LMG 22486) (Burkholderia cepacia (strain R1808)).